We begin with the raw amino-acid sequence, 874 residues long: Alanine--tRNA ligase (874 aa).

4 residues coordinate Zn(2+): His563, His567, Cys665, and His669.

The protein belongs to the class-II aminoacyl-tRNA synthetase family. It depends on Zn(2+) as a cofactor.

Its subcellular location is the cytoplasm. It carries out the reaction tRNA(Ala) + L-alanine + ATP = L-alanyl-tRNA(Ala) + AMP + diphosphate. Its function is as follows. Catalyzes the attachment of alanine to tRNA(Ala) in a two-step reaction: alanine is first activated by ATP to form Ala-AMP and then transferred to the acceptor end of tRNA(Ala). Also edits incorrectly charged Ser-tRNA(Ala) and Gly-tRNA(Ala) via its editing domain. In Histophilus somni (strain 2336) (Haemophilus somnus), this protein is Alanine--tRNA ligase.